Here is a 29-residue protein sequence, read N- to C-terminus: Galanin (29 aa).

The residue at position 29 (Ala29) is an Alanine amide.

It belongs to the galanin family.

Its subcellular location is the secreted. Contracts smooth muscle of the gastrointestinal and genitourinary tract, regulates growth hormone release, modulates insulin release, and may be involved in the control of adrenal secretion. The chain is Galanin (GAL) from Ovis aries (Sheep).